Consider the following 209-residue polypeptide: Holliday junction branch migration complex subunit RuvA (209 aa).

The interval 1–70 is domain I; the sequence is MFSYLKGEAI…EDGTYLYGFA (70 aa). Positions 71-149 are domain II; that stretch reads SAAARDLFRQ…QWRDQFSLPD (79 aa). Positions 149 to 153 are flexible linker; that stretch reads DTAAQ. Residues 154-209 form a domain III region; that stretch reads PNAAVHEDLELTLLALGYQETEIRGAIATLSQDSILLQNDNADEWIRRAITLLSQT.

The protein belongs to the RuvA family. In terms of assembly, homotetramer. Forms an RuvA(8)-RuvB(12)-Holliday junction (HJ) complex. HJ DNA is sandwiched between 2 RuvA tetramers; dsDNA enters through RuvA and exits via RuvB. An RuvB hexamer assembles on each DNA strand where it exits the tetramer. Each RuvB hexamer is contacted by two RuvA subunits (via domain III) on 2 adjacent RuvB subunits; this complex drives branch migration. In the full resolvosome a probable DNA-RuvA(4)-RuvB(12)-RuvC(2) complex forms which resolves the HJ.

The protein localises to the cytoplasm. Its function is as follows. The RuvA-RuvB-RuvC complex processes Holliday junction (HJ) DNA during genetic recombination and DNA repair, while the RuvA-RuvB complex plays an important role in the rescue of blocked DNA replication forks via replication fork reversal (RFR). RuvA specifically binds to HJ cruciform DNA, conferring on it an open structure. The RuvB hexamer acts as an ATP-dependent pump, pulling dsDNA into and through the RuvAB complex. HJ branch migration allows RuvC to scan DNA until it finds its consensus sequence, where it cleaves and resolves the cruciform DNA. The protein is Holliday junction branch migration complex subunit RuvA of Picosynechococcus sp. (strain ATCC 27264 / PCC 7002 / PR-6) (Agmenellum quadruplicatum).